The chain runs to 311 residues: Catabolite control protein B (311 aa).

One can recognise an HTH lacI-type domain in the interval 1 to 56; sequence MANIKEIARLANVSVSTVSRVLNHHPYVSEEKRKLVHQVMKELDYTPNRTAIDLIR. Positions 4 to 23 form a DNA-binding region, H-T-H motif; the sequence is IKEIARLANVSVSTVSRVLN.

Seems to be complexed to phosphorylated HPr.

Functionally, transcriptional regulator involved in catabolite repression of several operons. This is Catabolite control protein B (ccpB) from Bacillus subtilis (strain 168).